A 188-amino-acid polypeptide reads, in one-letter code: MLVHPEAMSVGALADKIRKIENWPQKGILFHDITPVLQSAEYFRLLVDLLVYRYMDQKIDIVAGLDARGFIIGAALAYQLNVGFVPIRKKGKLPFETVSQSYALEYGEAAVEIHTDAVKPGSRVLLVDDLVATGGTMLAGLELIRKLGGEIVEAAAILEFTDLQGGKNIRASGAPLFTLLQNEGCMKG.

It belongs to the purine/pyrimidine phosphoribosyltransferase family. As to quaternary structure, homodimer.

It is found in the cytoplasm. It carries out the reaction AMP + diphosphate = 5-phospho-alpha-D-ribose 1-diphosphate + adenine. It participates in purine metabolism; AMP biosynthesis via salvage pathway; AMP from adenine: step 1/1. Functionally, catalyzes a salvage reaction resulting in the formation of AMP, that is energically less costly than de novo synthesis. This Neisseria meningitidis serogroup C (strain 053442) protein is Adenine phosphoribosyltransferase.